Consider the following 618-residue polypeptide: Acetolactate synthase (618 aa).

A disordered region spans residues 1-30 (MSAPTKPHSPTFKPEPHSAANEPKHPAARP). Glu-85 contacts thiamine diphosphate. Residues Arg-187, 293–314 (HGTV…LGTR), and 336–355 (DIDP…IVGD) contribute to the FAD site. The interval 429–509 (QHQMWAAQFI…VKVALINNGN (81 aa)) is thiamine pyrophosphate binding. 2 residues coordinate Mg(2+): Asp-480 and Asn-507.

Belongs to the TPP enzyme family. It depends on Mg(2+) as a cofactor. Thiamine diphosphate serves as cofactor.

It carries out the reaction 2 pyruvate + H(+) = (2S)-2-acetolactate + CO2. It participates in amino-acid biosynthesis; L-isoleucine biosynthesis; L-isoleucine from 2-oxobutanoate: step 1/4. The protein operates within amino-acid biosynthesis; L-valine biosynthesis; L-valine from pyruvate: step 1/4. The chain is Acetolactate synthase (ilvB) from Mycobacterium bovis (strain ATCC BAA-935 / AF2122/97).